Consider the following 397-residue polypeptide: ATP-dependent RNA helicase eIF4A (397 aa).

The Q motif signature appears at Asp24–Gln52. Residues Ile55 to Ile225 enclose the Helicase ATP-binding domain. Position 68–75 (Ala68–Thr75) interacts with ATP. The DEAD box signature appears at Asp173–Asp176. The Helicase C-terminal domain maps to Gly236–Ile397.

This sequence belongs to the DEAD box helicase family. eIF4A subfamily. As to quaternary structure, component of the eIF4F complex, which composition varies with external and internal environmental conditions. It is composed of at least eIF4A, eIF4E and eIF4G.

The protein resides in the cytoplasm. It carries out the reaction ATP + H2O = ADP + phosphate + H(+). Functionally, ATP-dependent RNA helicase which is a subunit of the eIF4F complex involved in cap recognition and is required for mRNA binding to ribosome. In the current model of translation initiation, eIF4A unwinds RNA secondary structures in the 5'-UTR of mRNAs which is necessary to allow efficient binding of the small ribosomal subunit, and subsequent scanning for the initiator codon. The protein is ATP-dependent RNA helicase eIF4A (tif-1) of Neurospora crassa (strain ATCC 24698 / 74-OR23-1A / CBS 708.71 / DSM 1257 / FGSC 987).